The chain runs to 163 residues: Choriogonadotropin subunit beta (163 aa).

The N-terminal stretch at Met1–Ala20 is a signal peptide. Disulfide bonds link Cys29–Cys76, Cys43–Cys91, Cys46–Cys129, Cys54–Cys107, Cys58–Cys109, and Cys112–Cys119. A glycan (N-linked (GlcNAc...) asparagine) is linked at Asn50. N-linked (GlcNAc...) asparagine glycosylation occurs at Asn124. The segment covering Gln135–Gln151 has biased composition (polar residues). Residues Gln135–Gln163 are disordered. Ser139 is a glycosylation site (O-linked (GalNAc...) serine). N-linked (GlcNAc...) asparagine glycosylation occurs at Asn145. The O-linked (GalNAc...) serine glycan is linked to Ser150.

The protein belongs to the glycoprotein hormones subunit beta family. As to quaternary structure, heterodimer of a common alpha chain and a unique beta chain which confers biological specificity to thyrotropin, lutropin, follitropin and gonadotropin.

The protein resides in the secreted. Functionally, stimulates the ovaries to synthesize the steroids that are essential for the maintenance of pregnancy. The chain is Choriogonadotropin subunit beta (CGB) from Saimiri boliviensis boliviensis (Bolivian squirrel monkey).